The sequence spans 515 residues: Mucin-like protein Glc1.8a (515 aa).

An N-terminal signal peptide occupies residues 1-20 (MSQITLIILILAIGFSCTKS). Residues 21–467 (HPINSTRDGE…ANDIKKPAFP (447 aa)) are Extracellular-facing. Residues Asn24, Asn45, Asn51, Asn60, Asn85, Asn93, Asn102, Asn123, Asn129, Asn138, Asn180, Asn201, Asn207, Asn216, Asn258, Asn279, Asn285, Asn319, Asn327, Asn336, Asn357, Asn363, Asn372, Asn397, Asn405, Asn413, Asn434, and Asn441 are each glycosylated (N-linked (GlcNAc...) asparagine; by host). Positions 80-114 (SKKDENITGQSEINTSAKSQPINSTRDGEDSGTDL) are disordered. Residues 86 to 104 (ITGQSEINTSAKSQPINST) are compositionally biased toward polar residues. The segment at 314–358 (SKKDENVTGQSEINTSAKSQPINSTRDGEDSGTDLKNLLTDPANT) is disordered. Positions 320–338 (VTGQSEINTSAKSQPINST) are enriched in polar residues. The interval 393–413 (RKDENVTGQSEFNISTNSNLN) is disordered. The helical transmembrane segment at 468-488 (YCIILITFQIVTVGMIIYLVF) threads the bilayer. The Cytoplasmic segment spans residues 489 to 515 (RTMRKPCQSERAIPLNTFGFGNNSSHE).

This sequence belongs to the polydnaviridae Glc1.8 protein family.

The protein resides in the host membrane. Its function is as follows. Involved in suppression of the insect cellular immune response. Inhibits host hemocyte adhesion and phagocytosis. In Microplitis demolitor (Parasitoid wasp), this protein is Mucin-like protein Glc1.8a (O9).